Consider the following 63-residue polypeptide: Small ribosomal subunit protein eS31 (63 aa).

Zn(2+) contacts are provided by C34, C37, C53, and C56. The C4-type zinc-finger motif lies at 34 to 56 (CPKCGSVMAFHREPVPRWHCGKC).

Belongs to the eukaryotic ribosomal protein eS31 family. As to quaternary structure, part of the 30S ribosomal subunit. Zn(2+) is required as a cofactor.

The sequence is that of Small ribosomal subunit protein eS31 from Pyrobaculum neutrophilum (strain DSM 2338 / JCM 9278 / NBRC 100436 / V24Sta) (Thermoproteus neutrophilus).